A 329-amino-acid polypeptide reads, in one-letter code: Probable carboxylesterase 13 (329 aa).

At Met1 the chain carries N-acetylmethionine. Residues 81 to 83 (HGG) carry the Involved in the stabilization of the negatively charged intermediate by the formation of the oxyanion hole motif. Residues Ser165, Asp269, and His302 contribute to the active site.

Belongs to the 'GDXG' lipolytic enzyme family. In terms of tissue distribution, expressed in flowers.

The enzyme catalyses a carboxylic ester + H2O = an alcohol + a carboxylate + H(+). In terms of biological role, carboxylesterase acting on esters with varying acyl chain length. This is Probable carboxylesterase 13 (CXE13) from Arabidopsis thaliana (Mouse-ear cress).